The sequence spans 156 residues: Ribosome maturation factor RimP (156 aa).

Belongs to the RimP family.

It localises to the cytoplasm. Its function is as follows. Required for maturation of 30S ribosomal subunits. The chain is Ribosome maturation factor RimP from Microcystis aeruginosa (strain NIES-843 / IAM M-2473).